The chain runs to 490 residues: Phosphoglucosamine mutase (490 aa).

Catalysis depends on S139, which acts as the Phosphoserine intermediate. Mg(2+)-binding residues include S139, D279, D281, and D283. Position 139 is a phosphoserine (S139).

Belongs to the phosphohexose mutase family. Mg(2+) is required as a cofactor. Post-translationally, activated by phosphorylation.

The catalysed reaction is alpha-D-glucosamine 1-phosphate = D-glucosamine 6-phosphate. Catalyzes the conversion of glucosamine-6-phosphate to glucosamine-1-phosphate. The chain is Phosphoglucosamine mutase from Nostoc sp. (strain PCC 7120 / SAG 25.82 / UTEX 2576).